Reading from the N-terminus, the 316-residue chain is Thymidylate synthase (316 aa).

DUMP contacts are provided by residues Arg-23 and 178 to 179 (RR). Cys-198 serves as the catalytic Nucleophile. DUMP is bound by residues 218–221 (RSGD), Asn-229, and 259–261 (HIY). Residue Asp-221 coordinates (6R)-5,10-methylene-5,6,7,8-tetrahydrofolate. Ala-315 contributes to the (6R)-5,10-methylene-5,6,7,8-tetrahydrofolate binding site.

Belongs to the thymidylate synthase family. Bacterial-type ThyA subfamily. In terms of assembly, homodimer.

It is found in the cytoplasm. It carries out the reaction dUMP + (6R)-5,10-methylene-5,6,7,8-tetrahydrofolate = 7,8-dihydrofolate + dTMP. It functions in the pathway pyrimidine metabolism; dTTP biosynthesis. Catalyzes the reductive methylation of 2'-deoxyuridine-5'-monophosphate (dUMP) to 2'-deoxythymidine-5'-monophosphate (dTMP) while utilizing 5,10-methylenetetrahydrofolate (mTHF) as the methyl donor and reductant in the reaction, yielding dihydrofolate (DHF) as a by-product. This enzymatic reaction provides an intracellular de novo source of dTMP, an essential precursor for DNA biosynthesis. This is Thymidylate synthase from Lactiplantibacillus plantarum (strain ATCC BAA-793 / NCIMB 8826 / WCFS1) (Lactobacillus plantarum).